The sequence spans 249 residues: Ditrans,polycis-undecaprenyl-diphosphate synthase ((2E,6E)-farnesyl-diphosphate specific) (249 aa).

Asp29 is a catalytic residue. Mg(2+) is bound at residue Asp29. Substrate-binding positions include 30–33 (GNGR), Trp34, Arg42, His46, and 74–76 (STE). Asn77 (proton acceptor) is an active-site residue. Residues Trp78, Arg80, Arg197, and 203 to 205 (RLS) each bind substrate. Glu216 provides a ligand contact to Mg(2+).

This sequence belongs to the UPP synthase family. Homodimer. It depends on Mg(2+) as a cofactor.

The catalysed reaction is 8 isopentenyl diphosphate + (2E,6E)-farnesyl diphosphate = di-trans,octa-cis-undecaprenyl diphosphate + 8 diphosphate. In terms of biological role, generates ditrans,octacis-undecaprenyl pyrophosphate (UPP) from isopentenyl pyrophosphate (IPP) and farnesyl diphosphate. UPP is the precursor of glycosyl carrier lipid in the biosynthesis of bacterial cell wall polysaccharide components such as peptidoglycan and lipopolysaccharide. This Micrococcus luteus (Micrococcus lysodeikticus) protein is Ditrans,polycis-undecaprenyl-diphosphate synthase ((2E,6E)-farnesyl-diphosphate specific) (uppS).